A 278-amino-acid chain; its full sequence is Phosphoenolpyruvate carboxylase kinase 2 (278 aa).

The Protein kinase domain maps to 11-269; that stretch reads YQLCDEIGRG…AEDALRHSWM (259 aa). ATP-binding positions include 17-25 and lysine 40; that span reads IGRGRFGTI. The Proton acceptor role is filled by aspartate 137.

Belongs to the protein kinase superfamily. Ser/Thr protein kinase family. In terms of tissue distribution, expressed in flowers and roots, and at lower levels in cauline leaves. Barely detectable in rosette leaves and stems.

It catalyses the reaction L-seryl-[protein] + ATP = O-phospho-L-seryl-[protein] + ADP + H(+). The enzyme catalyses L-threonyl-[protein] + ATP = O-phospho-L-threonyl-[protein] + ADP + H(+). Functionally, calcium-independent kinase involved in light-dependent phosphoenolpyruvate carboxylase phosphorylation. The sequence is that of Phosphoenolpyruvate carboxylase kinase 2 (PPCK2) from Arabidopsis thaliana (Mouse-ear cress).